The chain runs to 193 residues: AP-3 complex subunit sigma-1 (193 aa).

Ser-191 bears the Phosphoserine mark.

The protein belongs to the adaptor complexes small subunit family. In terms of assembly, adaptor protein complex 3 (AP-3) is a heterotetramer composed of two large adaptins (delta-type subunit AP3D1 and beta-type subunit AP3B1 or AP3B2), a medium adaptin (mu-type subunit AP3M1 or AP3M2) and a small adaptin (sigma-type subunit APS1 or AP3S2). Interacts with AGAP1. AP-3 associates with the BLOC-1 complex.

The protein localises to the golgi apparatus. Its subcellular location is the cytoplasmic vesicle membrane. Part of the AP-3 complex, an adaptor-related complex which is not clathrin-associated. The complex is associated with the Golgi region as well as more peripheral structures. It facilitates the budding of vesicles from the Golgi membrane and may be directly involved in trafficking to lysosomes. In concert with the BLOC-1 complex, AP-3 is required to target cargos into vesicles assembled at cell bodies for delivery into neurites and nerve terminals. This is AP-3 complex subunit sigma-1 (AP3S1) from Bos taurus (Bovine).